A 365-amino-acid chain; its full sequence is DNA replication and repair protein RecF (365 aa).

ATP is bound at residue 30–37; the sequence is GNNGMGKT.

Belongs to the RecF family.

The protein localises to the cytoplasm. Its function is as follows. The RecF protein is involved in DNA metabolism; it is required for DNA replication and normal SOS inducibility. RecF binds preferentially to single-stranded, linear DNA. It also seems to bind ATP. The sequence is that of DNA replication and repair protein RecF from Parabacteroides distasonis (strain ATCC 8503 / DSM 20701 / CIP 104284 / JCM 5825 / NCTC 11152).